The sequence spans 403 residues: High affinity transport system protein p37 (403 aa).

The first 23 residues, Met1–Ser23, serve as a signal peptide directing secretion. Residue Cys24 is the site of N-palmitoyl cysteine attachment. Cys24 is lipidated: S-diacylglycerol cysteine.

It is found in the cell membrane. Functionally, P37 is part of a high-affinity transport system. The protein is High affinity transport system protein p37 (p37) of Mesomycoplasma hyorhinis (Mycoplasma hyorhinis).